Here is a 206-residue protein sequence, read N- to C-terminus: Platelet glycoprotein Ib beta chain (206 aa).

Residues 1–25 form the signal peptide; sequence MGSGPRGALSLLLLLLAPPSRPAAG. 2 disulfide bridges follow: Cys-26–Cys-32 and Cys-30–Cys-39. The LRRNT domain maps to 27-55; the sequence is PAPCSCAGTLVDCGRRGLTWASLPTAFPV. Residues 27-147 lie on the Extracellular side of the membrane; the sequence is PAPCSCAGTL…RAACAPGPLC (121 aa). Residues 60–83 form an LRR repeat; it reads LVLTGNNLTALPPGLLDALPALRT. Asn-66 carries an N-linked (GlcNAc...) asparagine glycan. One can recognise an LRRCT domain in the interval 89-143; the sequence is NPWRCDCRLVPLRAWLAGRPERAPYRDLRCVAPPALRGRLLPYLAEDELRAACAP. Cystine bridges form between Cys-93–Cys-118 and Cys-95–Cys-141. Residues 148–172 traverse the membrane as a helical segment; it reads WGALAAQLALLGLGLLHALLLVLLL. Over 173 to 206 the chain is Cytoplasmic; sequence CRLRRLRARARARAAARLSLTDPLVAERAGTDES. The residue at position 191 (Ser-191) is a Phosphoserine; by PKA. Thr-193 is modified (phosphothreonine).

Two GP-Ib beta are disulfide-linked to one GP-Ib alpha. GP-IX is complexed with the GP-Ib heterodimer via a non covalent linkage. Interacts with TRAF4. As to expression, expressed in heart and brain.

Its subcellular location is the membrane. Its function is as follows. Gp-Ib, a surface membrane protein of platelets, participates in the formation of platelet plugs by binding to von Willebrand factor, which is already bound to the subendothelium. The chain is Platelet glycoprotein Ib beta chain (GP1BB) from Homo sapiens (Human).